Here is a 259-residue protein sequence, read N- to C-terminus: Ribonuclease PH (259 aa).

Residues Arg-88 and 126-128 (GTR) each bind phosphate.

Belongs to the RNase PH family. In terms of assembly, homohexameric ring arranged as a trimer of dimers.

It carries out the reaction tRNA(n+1) + phosphate = tRNA(n) + a ribonucleoside 5'-diphosphate. Its function is as follows. Phosphorolytic 3'-5' exoribonuclease that plays an important role in tRNA 3'-end maturation. Removes nucleotide residues following the 3'-CCA terminus of tRNAs; can also add nucleotides to the ends of RNA molecules by using nucleoside diphosphates as substrates, but this may not be physiologically important. Probably plays a role in initiation of 16S rRNA degradation (leading to ribosome degradation) during starvation. The chain is Ribonuclease PH from Mycobacterium bovis (strain BCG / Pasteur 1173P2).